We begin with the raw amino-acid sequence, 165 residues long: Large ribosomal subunit protein mL49 (165 aa).

Positions 42 to 75 are enriched in low complexity; that stretch reads TTATTTTPLQQQQQQQPTTQPTTPIQTQTGAAPT. Residues 42-81 form a disordered region; it reads TTATTTTPLQQQQQQQPTTQPTTPIQTQTGAAPTESTKPV.

It belongs to the mitochondrion-specific ribosomal protein mL49 family. Component of the mitochondrial large ribosomal subunit (mt-LSU). Mature N.crassa 74S mitochondrial ribosomes consist of a small (37S) and a large (54S) subunit. The 37S small subunit contains a 16S ribosomal RNA (16S mt-rRNA) and 32 different proteins. The 54S large subunit contains a 23S rRNA (23S mt-rRNA) and 42 different proteins.

It localises to the mitochondrion. Functionally, component of the mitochondrial ribosome (mitoribosome), a dedicated translation machinery responsible for the synthesis of mitochondrial genome-encoded proteins, including at least some of the essential transmembrane subunits of the mitochondrial respiratory chain. The mitoribosomes are attached to the mitochondrial inner membrane and translation products are cotranslationally integrated into the membrane. This chain is Large ribosomal subunit protein mL49 (img2), found in Neurospora crassa (strain ATCC 24698 / 74-OR23-1A / CBS 708.71 / DSM 1257 / FGSC 987).